The following is a 426-amino-acid chain: MKDCFPQGLNGKKTAVALSGGLDSVVLLHLLVRAGKKGGFIPDALHIHHGLSPRADDWADFCQNYCDMLGVGLETVKVCVEKNGLGIEAAARQKRYAAFAEKGFDVLALAHHRDDQIETFMLAVARGGGLRALAAMPAVRPFGEKGIIWRPLLPFSRQDIWDYAQKHGLPNIEDESNTDTAYLRNRFRHRILPELSAQIPHFGRHVLNNVRALQEDLALLDEVVVQDCRWVCGAGYFDTARWLTFSPRRKTHILRHFLKENGIPVPNQNALADIARVLTEAKTGRWNLQGFELHHYAGRLFVFRLEKTDKLRFLKDRQISGNLREILTGQGFVLKRHPFGLPEHLLEQDGILRTVAASDTLAMGGIHKDVKKILQGKRVLPVLRPIWPLVADSGNRPLALANCCADFQYSVSDGILPVHPDFPILF.

19–24 (SGGLDS) contacts ATP.

It belongs to the tRNA(Ile)-lysidine synthase family.

The protein resides in the cytoplasm. The enzyme catalyses cytidine(34) in tRNA(Ile2) + L-lysine + ATP = lysidine(34) in tRNA(Ile2) + AMP + diphosphate + H(+). In terms of biological role, ligates lysine onto the cytidine present at position 34 of the AUA codon-specific tRNA(Ile) that contains the anticodon CAU, in an ATP-dependent manner. Cytidine is converted to lysidine, thus changing the amino acid specificity of the tRNA from methionine to isoleucine. The polypeptide is tRNA(Ile)-lysidine synthase (Neisseria meningitidis serogroup A / serotype 4A (strain DSM 15465 / Z2491)).